We begin with the raw amino-acid sequence, 106 residues long: PTS system fructose-like EIIB component 2 (106 aa).

One can recognise a PTS EIIB type-2 domain in the interval 1-103 (MTKIIAVTAC…IMSKIEAHLA (103 aa)). The active-site Phosphocysteine intermediate is Cys-10. Cys-10 is modified (phosphocysteine; by EIIA).

The protein localises to the cytoplasm. The catalysed reaction is D-fructose(out) + N(pros)-phospho-L-histidyl-[protein] = D-fructose 1-phosphate(in) + L-histidyl-[protein]. The phosphoenolpyruvate-dependent sugar phosphotransferase system (sugar PTS), a major carbohydrate active transport system, catalyzes the phosphorylation of incoming sugar substrates concomitantly with their translocation across the cell membrane. The enzyme II FrwABC PTS system is involved in fructose transport. This chain is PTS system fructose-like EIIB component 2 (frwB), found in Escherichia coli O157:H7.